A 704-amino-acid polypeptide reads, in one-letter code: Arylphorin (704 aa).

The N-terminal stretch at 1–16 (MKIVLVLAGLIALVQS) is a signal peptide. N-linked (GlcNAc...) asparagine glycosylation is found at Asn73, Asn212, and Asn360.

The protein belongs to the hemocyanin family. Homohexamer of two stacked trimers; disulfide-linked. Glycosylation at Asn-360 is required for proper folding.

The protein localises to the secreted. The protein resides in the extracellular space. In terms of biological role, arylphorin is a larval storage protein (LSP) which may serve as a storage protein used primarily as a source of aromatic amino acids for protein synthesis during metamorphosis. It is a constituent of the sclerotizing system of the cuticle, and serves as a carrier for ecdysteroid hormone. The polypeptide is Arylphorin (Antheraea pernyi (Chinese oak silk moth)).